The primary structure comprises 657 residues: Acetyl-coenzyme A synthetase (657 aa).

CoA-binding positions include 192-195 and Thr-311; that span reads RRGK. ATP is bound by residues 387–389, 411–416, Asp-504, Arg-519, and Arg-530; these read GEP and DTWWQT. 2 residues coordinate Mg(2+): His-543 and Val-546. Arg-592 contributes to the CoA binding site. Lys-617 carries the post-translational modification N6-acetyllysine.

Belongs to the ATP-dependent AMP-binding enzyme family. It depends on Mg(2+) as a cofactor. Post-translationally, acetylated. Deacetylation by the SIR2-homolog deacetylase activates the enzyme.

The enzyme catalyses acetate + ATP + CoA = acetyl-CoA + AMP + diphosphate. Catalyzes the conversion of acetate into acetyl-CoA (AcCoA), an essential intermediate at the junction of anabolic and catabolic pathways. AcsA undergoes a two-step reaction. In the first half reaction, AcsA combines acetate with ATP to form acetyl-adenylate (AcAMP) intermediate. In the second half reaction, it can then transfer the acetyl group from AcAMP to the sulfhydryl group of CoA, forming the product AcCoA. The chain is Acetyl-coenzyme A synthetase from Campylobacter jejuni subsp. jejuni serotype O:2 (strain ATCC 700819 / NCTC 11168).